We begin with the raw amino-acid sequence, 404 residues long: Zinc finger TRAF-type-containing protein 1 (404 aa).

A compositionally biased stretch (gly residues) spans 1-13 (MSGAEEAGGGGPA). The segment at 1 to 22 (MSGAEEAGGGGPAAGPAGSVPA) is disordered. The RING-type; degenerate zinc-finger motif lies at 111–156 (CTVCLDLPKASVYQCTNGHLMCAGCFIHLLADARLKEEQATCPNCR). The TRAF-type zinc finger occupies 152-225 (CPNCRCEISK…PWHGPFHELT (74 aa)).

This sequence belongs to the ZFTRAF1 family. As to quaternary structure, interacts with LGALS3.

The protein resides in the cytoplasm. It localises to the perinuclear region. This is Zinc finger TRAF-type-containing protein 1 from Homo sapiens (Human).